Reading from the N-terminus, the 131-residue chain is Profilin-2 (131 aa).

It belongs to the profilin family. Occurs in many kinds of cells as a complex with monomeric actin in a 1:1 ratio. Expressed in the intestinal wall, the spermatheca, and the pharynx.

It localises to the cytoplasm. Its subcellular location is the cytoskeleton. Functionally, binds to actin and affects the structure of the cytoskeleton. At high concentrations, profilin prevents the polymerization of actin, whereas it enhances it at low concentrations. By binding to PIP2, it inhibits the formation of IP3 and DG. The protein is Profilin-2 (pfn-2) of Caenorhabditis elegans.